A 455-amino-acid chain; its full sequence is Glutamyl-tRNA reductase (455 aa).

Substrate is bound by residues 49-52 (TCNR), Ser-109, 114-116 (EAQ), and Gln-120. The Nucleophile role is filled by Cys-50. NADP(+) is bound at residue 190 to 195 (GAGAMG).

It belongs to the glutamyl-tRNA reductase family. As to quaternary structure, homodimer.

It carries out the reaction (S)-4-amino-5-oxopentanoate + tRNA(Glu) + NADP(+) = L-glutamyl-tRNA(Glu) + NADPH + H(+). Its pathway is porphyrin-containing compound metabolism; protoporphyrin-IX biosynthesis; 5-aminolevulinate from L-glutamyl-tRNA(Glu): step 1/2. Catalyzes the NADPH-dependent reduction of glutamyl-tRNA(Glu) to glutamate 1-semialdehyde (GSA). In Salinispora tropica (strain ATCC BAA-916 / DSM 44818 / JCM 13857 / NBRC 105044 / CNB-440), this protein is Glutamyl-tRNA reductase.